The sequence spans 134 residues: Large ribosomal subunit protein uL16c (134 aa).

The protein belongs to the universal ribosomal protein uL16 family. In terms of assembly, part of the 50S ribosomal subunit.

The protein resides in the plastid. The protein localises to the chloroplast. This Atropa belladonna (Belladonna) protein is Large ribosomal subunit protein uL16c.